A 263-amino-acid chain; its full sequence is Protein PYRICULARIA ORYZAE RESISTANCE 21 (263 aa).

The 68-residue stretch at Met-1 to Lys-68 folds into the HMA domain. A metal cation is bound by residues Cys-12 and Cys-15. Positions Cys-126–Pro-153 are disordered. Basic and acidic residues predominate over residues Lys-139–Pro-153.

In terms of biological role, involved in defense responses. Contributes to slowing defense responses toward Magnaporthe oryzae. In Oryza sativa subsp. indica (Rice), this protein is Protein PYRICULARIA ORYZAE RESISTANCE 21.